The sequence spans 235 residues: MNKNVMVKGLTALDILTSLGCAENISDQPHSIAKAEKNVKEITDATKAPYNSVVAFAGGTGVVVGKNTIVTNKHIAKSNNIFKNRVSAHHSSKGKGGGNYDVKDIVEYPGKEDLAIVHVHETSTEGLNFNKNVSYTKFADGAKAKDRISIIGYPKGAQTKYKMFESTGTINHINGTIMEFDAYAQPGNSGSPVLNSKNELIGILYAGSGKDESEKNFGVYFTPQLKEFIQNNIEK.

The first 35 residues, methionine 1–alanine 35, serve as a signal peptide directing secretion. Active-site charge relay system residues include histidine 74, aspartate 113, and serine 189.

This sequence belongs to the peptidase S1B family.

The protein localises to the secreted. In Staphylococcus aureus, this protein is Serine protease SplA (splA).